The following is a 172-amino-acid chain: dCTP pyrophosphatase (172 aa).

It catalyses the reaction dCTP + H2O = dCMP + diphosphate + H(+). The polypeptide is dCTP pyrophosphatase (56) (Enterobacteria phage LZ5 (Bacteriophage LZ5)).